The primary structure comprises 173 residues: Photosystem I assembly protein Ycf3 (173 aa).

3 TPR repeats span residues A35–Q68, G72–Q105, and G120–G153.

It belongs to the Ycf3 family.

It localises to the cellular thylakoid membrane. Essential for the assembly of the photosystem I (PSI) complex. May act as a chaperone-like factor to guide the assembly of the PSI subunits. The protein is Photosystem I assembly protein Ycf3 of Prochlorococcus marinus (strain NATL1A).